We begin with the raw amino-acid sequence, 193 residues long: Ribonuclease HII (193 aa).

The RNase H type-2 domain maps to 1 to 193 (MTLGIDEAGR…SFALKNNWFS (193 aa)). A divalent metal cation-binding residues include Asp-6, Glu-7, and Asp-103.

It belongs to the RNase HII family. Requires Mn(2+) as cofactor. Mg(2+) is required as a cofactor.

The protein resides in the cytoplasm. It catalyses the reaction Endonucleolytic cleavage to 5'-phosphomonoester.. Its function is as follows. Endonuclease that specifically degrades the RNA of RNA-DNA hybrids. The polypeptide is Ribonuclease HII (Helicobacter acinonychis (strain Sheeba)).